Consider the following 313-residue polypeptide: Protochlorophyllide reductase (313 aa).

Belongs to the short-chain dehydrogenases/reductases (SDR) family. POR subfamily.

The protein resides in the plastid. It is found in the chloroplast. It carries out the reaction chlorophyllide a + NADP(+) = protochlorophyllide a + NADPH + H(+). The protein operates within porphyrin-containing compound metabolism; chlorophyll biosynthesis. Phototransformation of protochlorophyllide (Pchlide) to chlorophyllide (Chlide). In Avena sativa (Oat), this protein is Protochlorophyllide reductase.